Reading from the N-terminus, the 41-residue chain is Large ribosomal subunit protein bL36 (41 aa).

Belongs to the bacterial ribosomal protein bL36 family.

The sequence is that of Large ribosomal subunit protein bL36 from Erythrobacter litoralis (strain HTCC2594).